A 383-amino-acid chain; its full sequence is tRNA-specific 2-thiouridylase MnmA (383 aa).

Residues 30 to 37 and M56 each bind ATP; that span reads GMSGGVDS. Residues 116-118 form an interaction with target base in tRNA region; the sequence is NPD. C121 serves as the catalytic Nucleophile. C121 and C218 are joined by a disulfide. Position 146 (G146) interacts with ATP. The tract at residues 168 to 170 is interaction with tRNA; the sequence is KDQ. C218 acts as the Cysteine persulfide intermediate in catalysis. The segment at 330 to 331 is interaction with tRNA; sequence RY.

It belongs to the MnmA/TRMU family.

The protein resides in the cytoplasm. It carries out the reaction S-sulfanyl-L-cysteinyl-[protein] + uridine(34) in tRNA + AH2 + ATP = 2-thiouridine(34) in tRNA + L-cysteinyl-[protein] + A + AMP + diphosphate + H(+). Functionally, catalyzes the 2-thiolation of uridine at the wobble position (U34) of tRNA, leading to the formation of s(2)U34. The protein is tRNA-specific 2-thiouridylase MnmA of Haemophilus influenzae (strain ATCC 51907 / DSM 11121 / KW20 / Rd).